Reading from the N-terminus, the 200-residue chain is Holliday junction branch migration complex subunit RuvA (200 aa).

Residues M1 to S64 are domain I. Positions G65–S143 are domain II. The segment at P144–D154 is flexible linker. Positions D154–S200 are domain III.

It belongs to the RuvA family. In terms of assembly, homotetramer. Forms an RuvA(8)-RuvB(12)-Holliday junction (HJ) complex. HJ DNA is sandwiched between 2 RuvA tetramers; dsDNA enters through RuvA and exits via RuvB. An RuvB hexamer assembles on each DNA strand where it exits the tetramer. Each RuvB hexamer is contacted by two RuvA subunits (via domain III) on 2 adjacent RuvB subunits; this complex drives branch migration. In the full resolvosome a probable DNA-RuvA(4)-RuvB(12)-RuvC(2) complex forms which resolves the HJ.

The protein resides in the cytoplasm. In terms of biological role, the RuvA-RuvB-RuvC complex processes Holliday junction (HJ) DNA during genetic recombination and DNA repair, while the RuvA-RuvB complex plays an important role in the rescue of blocked DNA replication forks via replication fork reversal (RFR). RuvA specifically binds to HJ cruciform DNA, conferring on it an open structure. The RuvB hexamer acts as an ATP-dependent pump, pulling dsDNA into and through the RuvAB complex. HJ branch migration allows RuvC to scan DNA until it finds its consensus sequence, where it cleaves and resolves the cruciform DNA. In Pelodictyon phaeoclathratiforme (strain DSM 5477 / BU-1), this protein is Holliday junction branch migration complex subunit RuvA.